The chain runs to 468 residues: ATP synthase subunit beta (468 aa).

155 to 162 (GGAGVGKT) contributes to the ATP binding site.

Belongs to the ATPase alpha/beta chains family. F-type ATPases have 2 components, CF(1) - the catalytic core - and CF(0) - the membrane proton channel. CF(1) has five subunits: alpha(3), beta(3), gamma(1), delta(1), epsilon(1). CF(0) has three main subunits: a(1), b(2) and c(9-12). The alpha and beta chains form an alternating ring which encloses part of the gamma chain. CF(1) is attached to CF(0) by a central stalk formed by the gamma and epsilon chains, while a peripheral stalk is formed by the delta and b chains.

The protein resides in the cell membrane. The enzyme catalyses ATP + H2O + 4 H(+)(in) = ADP + phosphate + 5 H(+)(out). In terms of biological role, produces ATP from ADP in the presence of a proton gradient across the membrane. The catalytic sites are hosted primarily by the beta subunits. This Streptococcus equi subsp. zooepidemicus (strain H70) protein is ATP synthase subunit beta.